The chain runs to 793 residues: Probable phosphoketolase (793 aa).

Belongs to the XFP family. Thiamine diphosphate serves as cofactor.

This Gloeobacter violaceus (strain ATCC 29082 / PCC 7421) protein is Probable phosphoketolase.